The primary structure comprises 430 residues: Aspartate aminotransferase, mitochondrial (430 aa).

Residues 1-29 (MALLHSGRVLSGVASAFHPGLAAAASARA) constitute a mitochondrion transit peptide. Phosphothreonine is present on threonine 48. Lysine 59 is modified (N6-acetyllysine). Substrate is bound at residue glycine 65. Lysine 73 carries the N6-acetyllysine; alternate modification. Lysine 73 bears the N6-succinyllysine; alternate mark. The residue at position 82 (lysine 82) is an N6-acetyllysine. Lysine 90 bears the N6-acetyllysine; alternate mark. Lysine 90 bears the N6-succinyllysine; alternate mark. Tyrosine 96 carries the post-translational modification 3'-nitrotyrosine; alternate. Position 96 is a phosphotyrosine; alternate (tyrosine 96). Lysine 107, lysine 122, and lysine 159 each carry N6-acetyllysine; alternate. N6-succinyllysine; alternate is present on residues lysine 107, lysine 122, and lysine 159. A substrate-binding site is contributed by tryptophan 162. An N6-acetyllysine; alternate modification is found at lysine 185. Lysine 185 carries the post-translational modification N6-succinyllysine; alternate. Asparagine 215 contacts substrate. Lysine 227 carries the post-translational modification N6-succinyllysine. Lysine 234 is modified (N6-acetyllysine). An N6-acetyllysine; alternate mark is found at lysine 279 and lysine 296. N6-(pyridoxal phosphate)lysine; alternate is present on lysine 279. Lysine 296 is modified (N6-succinyllysine; alternate). An N6-acetyllysine modification is found at lysine 302. An N6-acetyllysine; alternate modification is found at lysine 309. Lysine 309 carries the N6-succinyllysine; alternate modification. At arginine 313 the chain carries Asymmetric dimethylarginine. Lysine 345 carries the post-translational modification N6-acetyllysine. Position 363 is an N6-acetyllysine; alternate (lysine 363). Residue lysine 363 is modified to N6-succinyllysine; alternate. 2 positions are modified to N6-acetyllysine: lysine 364 and lysine 387. N6-acetyllysine; alternate is present on residues lysine 396 and lysine 404. 2 positions are modified to N6-succinyllysine; alternate: lysine 396 and lysine 404. Arginine 407 contacts substrate.

The protein belongs to the class-I pyridoxal-phosphate-dependent aminotransferase family. As to quaternary structure, homodimer. Requires pyridoxal 5'-phosphate as cofactor.

The protein resides in the mitochondrion matrix. It localises to the cell membrane. It carries out the reaction L-aspartate + 2-oxoglutarate = oxaloacetate + L-glutamate. The enzyme catalyses L-kynurenine + 2-oxoglutarate = kynurenate + L-glutamate + H2O. Its function is as follows. Catalyzes the irreversible transamination of the L-tryptophan metabolite L-kynurenine to form kynurenic acid (KA). As a member of the malate-aspartate shuttle, it has a key role in the intracellular NAD(H) redox balance. Is important for metabolite exchange between mitochondria and cytosol, and for amino acid metabolism. Facilitates cellular uptake of long-chain free fatty acids. This is Aspartate aminotransferase, mitochondrial (GOT2) from Sus scrofa (Pig).